A 221-amino-acid chain; its full sequence is 7-cyano-7-deazaguanine synthase (221 aa).

8–18 (LSGGMDSAAVI) lines the ATP pocket. Residues Cys186, Cys196, Cys199, and Cys202 each coordinate Zn(2+).

Belongs to the QueC family. Zn(2+) serves as cofactor.

The enzyme catalyses 7-carboxy-7-deazaguanine + NH4(+) + ATP = 7-cyano-7-deazaguanine + ADP + phosphate + H2O + H(+). The protein operates within purine metabolism; 7-cyano-7-deazaguanine biosynthesis. Its function is as follows. Catalyzes the ATP-dependent conversion of 7-carboxy-7-deazaguanine (CDG) to 7-cyano-7-deazaguanine (preQ(0)). The sequence is that of 7-cyano-7-deazaguanine synthase from Stenotrophomonas maltophilia (strain R551-3).